The following is a 485-amino-acid chain: CCA-adding enzyme (485 aa).

The ATP site is built by serine 53 and arginine 56. Residues serine 53 and arginine 56 each contribute to the CTP site. 3 residues coordinate Mg(2+): aspartate 65, aspartate 67, and aspartate 124. Histidine 146, lysine 164, and tyrosine 173 together coordinate ATP. Residues histidine 146, lysine 164, and tyrosine 173 each contribute to the CTP site.

It belongs to the tRNA nucleotidyltransferase/poly(A) polymerase family. Archaeal CCA-adding enzyme subfamily. As to quaternary structure, homodimer. Mg(2+) is required as a cofactor.

The enzyme catalyses a tRNA precursor + 2 CTP + ATP = a tRNA with a 3' CCA end + 3 diphosphate. It carries out the reaction a tRNA with a 3' CCA end + 2 CTP + ATP = a tRNA with a 3' CCACCA end + 3 diphosphate. Functionally, catalyzes the addition and repair of the essential 3'-terminal CCA sequence in tRNAs without using a nucleic acid template. Adds these three nucleotides in the order of C, C, and A to the tRNA nucleotide-73, using CTP and ATP as substrates and producing inorganic pyrophosphate. tRNA 3'-terminal CCA addition is required both for tRNA processing and repair. Also involved in tRNA surveillance by mediating tandem CCA addition to generate a CCACCA at the 3' terminus of unstable tRNAs. While stable tRNAs receive only 3'-terminal CCA, unstable tRNAs are marked with CCACCA and rapidly degraded. The chain is CCA-adding enzyme from Methanopyrus kandleri (strain AV19 / DSM 6324 / JCM 9639 / NBRC 100938).